A 413-amino-acid polypeptide reads, in one-letter code: Divalent metal cation transporter MntH (413 aa).

At 1-19 the chain is on the cytoplasmic side; the sequence is MTDNRVENSSGRAARKLRL. A helical transmembrane segment spans residues 20–39; that stretch reads ALMGPAFIAAIGYIDPGNFA. Over 40–51 the chain is Periplasmic; sequence TNIQAGASFGYQ. The chain crosses the membrane as a helical span at residues 52 to 71; that stretch reads LLWVVVWANLMAMLIQILSA. Over 72 to 95 the chain is Cytoplasmic; it reads KLGIATGKNLAEQIRDHYPRPVVW. A helical membrane pass occupies residues 96–118; it reads FYWVQAEIIAMATDLAEFIGAAI. At 119-125 the chain is on the periplasmic side; that stretch reads GFKLILG. Residues 126–145 form a helical membrane-spanning segment; sequence VSLLQGAVLTGIATFLILML. Topologically, residues 146–155 are cytoplasmic; that stretch reads QRRGQKPLEK. The chain crosses the membrane as a helical span at residues 156–175; that stretch reads VIGGLLLFVAAAYIVELFFS. The Periplasmic portion of the chain corresponds to 176–196; that stretch reads QPDMAQLGKGMVIPALPNPEA. A helical transmembrane segment spans residues 197-220; the sequence is VFLAAGVLGATIMPHVIYLHSSLT. At 221-238 the chain is on the cytoplasmic side; it reads QHLHGGTRQQRYSATKWD. The helical transmembrane segment at 239-258 threads the bilayer; sequence VAIAMTIAGFVNLAMMATAA. The Periplasmic portion of the chain corresponds to 259 to 276; the sequence is AAFHFSGHTGIADLDQAY. Residues 277–297 form a helical membrane-spanning segment; that stretch reads LTLEPLLSHAAATVFGLSLVA. At 298 to 327 the chain is on the cytoplasmic side; that stretch reads AGLSSTVVGTLAGQVVMQGFVRFHIPLWVR. Residues 328 to 344 form a helical membrane-spanning segment; sequence RTITMLPSFIVILMGLD. The Periplasmic segment spans residues 345–350; that stretch reads PTRILV. A helical transmembrane segment spans residues 351 to 370; that stretch reads MSQVLLSFGIALALVPLLIF. The Cytoplasmic segment spans residues 371-387; it reads TSNATLMGELVNTRRVK. A helical transmembrane segment spans residues 388-406; sequence QIGWIIVVLVVALNIWLLV. The Periplasmic portion of the chain corresponds to 407 to 413; that stretch reads GTVMGLS.

Belongs to the NRAMP family.

It is found in the cell inner membrane. Functionally, h(+)-stimulated, divalent metal cation uptake system. This is Divalent metal cation transporter MntH from Salmonella schwarzengrund (strain CVM19633).